The primary structure comprises 1217 residues: ATP-dependent helicase/nuclease subunit A (1217 aa).

In terms of domain architecture, UvrD-like helicase ATP-binding spans 10-475 (VIWTDAQWQS…IDLSQNFRSR (466 aa)). ATP is bound at residue 31-38 (AAAGSGKT). One can recognise a UvrD-like helicase C-terminal domain in the interval 476–786 (KEVLSTTNYI…RMMTIHSSKG (311 aa)).

The protein belongs to the helicase family. AddA subfamily. Heterodimer of AddA and AddB/RexB. Mg(2+) serves as cofactor.

The catalysed reaction is Couples ATP hydrolysis with the unwinding of duplex DNA by translocating in the 3'-5' direction.. It catalyses the reaction ATP + H2O = ADP + phosphate + H(+). Functionally, the heterodimer acts as both an ATP-dependent DNA helicase and an ATP-dependent, dual-direction single-stranded exonuclease. Recognizes the chi site generating a DNA molecule suitable for the initiation of homologous recombination. The AddA nuclease domain is required for chi fragment generation; this subunit has the helicase and 3' -&gt; 5' nuclease activities. The protein is ATP-dependent helicase/nuclease subunit A of Staphylococcus aureus (strain MRSA252).